The chain runs to 312 residues: Acetyl-coenzyme A carboxylase carboxyl transferase subunit alpha (312 aa).

Positions R36 to T286 constitute a CoA carboxyltransferase C-terminal domain.

It belongs to the AccA family. As to quaternary structure, acetyl-CoA carboxylase is a heterohexamer composed of biotin carboxyl carrier protein (AccB), biotin carboxylase (AccC) and two subunits each of ACCase subunit alpha (AccA) and ACCase subunit beta (AccD).

The protein resides in the cytoplasm. It carries out the reaction N(6)-carboxybiotinyl-L-lysyl-[protein] + acetyl-CoA = N(6)-biotinyl-L-lysyl-[protein] + malonyl-CoA. The protein operates within lipid metabolism; malonyl-CoA biosynthesis; malonyl-CoA from acetyl-CoA: step 1/1. Component of the acetyl coenzyme A carboxylase (ACC) complex. First, biotin carboxylase catalyzes the carboxylation of biotin on its carrier protein (BCCP) and then the CO(2) group is transferred by the carboxyltransferase to acetyl-CoA to form malonyl-CoA. The sequence is that of Acetyl-coenzyme A carboxylase carboxyl transferase subunit alpha from Helicobacter pylori (strain P12).